The chain runs to 415 residues: Esterase FrsA (415 aa).

The protein belongs to the FrsA family.

It carries out the reaction a carboxylic ester + H2O = an alcohol + a carboxylate + H(+). Its function is as follows. Catalyzes the hydrolysis of esters. The protein is Esterase FrsA of Vibrio parahaemolyticus serotype O3:K6 (strain RIMD 2210633).